The following is a 344-amino-acid chain: tRNA N6-adenosine threonylcarbamoyltransferase (344 aa).

Fe cation-binding residues include His-111 and His-115. Substrate contacts are provided by residues 134-138, Asp-167, Gly-180, and Asn-277; that span reads LVSGG. Asp-305 is a binding site for Fe cation.

It belongs to the KAE1 / TsaD family. Requires Fe(2+) as cofactor.

Its subcellular location is the cytoplasm. It carries out the reaction L-threonylcarbamoyladenylate + adenosine(37) in tRNA = N(6)-L-threonylcarbamoyladenosine(37) in tRNA + AMP + H(+). In terms of biological role, required for the formation of a threonylcarbamoyl group on adenosine at position 37 (t(6)A37) in tRNAs that read codons beginning with adenine. Is involved in the transfer of the threonylcarbamoyl moiety of threonylcarbamoyl-AMP (TC-AMP) to the N6 group of A37, together with TsaE and TsaB. TsaD likely plays a direct catalytic role in this reaction. This Glaesserella parasuis serovar 5 (strain SH0165) (Haemophilus parasuis) protein is tRNA N6-adenosine threonylcarbamoyltransferase.